Consider the following 234-residue polypeptide: Probable ascorbate-specific transmembrane electron transporter 1 (234 aa).

Residues 1–9 are Cytoplasmic-facing; that stretch reads MGLGVRAAP. The helical transmembrane segment at 10-30 threads the bilayer; the sequence is FTYVAHALAVAAATMVLVWCI. Positions 13 to 217 constitute a Cytochrome b561 domain; the sequence is VAHALAVAAA…FGASVVVAAV (205 aa). Topologically, residues 31–48 are extracellular; sequence HFRGGLAFEATNKNLIFN. A helical membrane pass occupies residues 49-69; the sequence is VHPVLMLIGYIILGSEAIMVY. Histidine 50 is a binding site for heme b. L-ascorbate is bound at residue 65 to 73; sequence AIMVYKVLP. The Cytoplasmic segment spans residues 70 to 82; that stretch reads KVLPTWKHDTTKL. A helical membrane pass occupies residues 83–103; sequence IHLILHAIALVFGAVGIYCAF. Positions 84 and 118 each coordinate heme b. At 104-121 the chain is on the extracellular side; it reads KFHNESGIANLYSLHSWL. 114 to 123 contacts monodehydro-L-ascorbate radical; the sequence is LYSLHSWLGI. Residues 122–142 traverse the membrane as a helical segment; sequence GIGTICLYGIQWIFGFVAFFF. At 143-151 the chain is on the cytoplasmic side; the sequence is PRASPSVRK. The helical transmembrane segment at 152-172 threads the bilayer; the sequence is GVLPWHILFGLFVYILALATA. Histidine 157 is a heme b binding site. The Extracellular segment spans residues 173–194; that stretch reads ELGFLEKLTFLQSSGLDKYGAE. A helical membrane pass occupies residues 195-215; it reads AFLVNFTALIVVLFGASVVVA. Topologically, residues 216 to 234 are cytoplasmic; the sequence is AVSPARVEEPHEYAPIPES.

Heme b serves as cofactor.

The protein resides in the membrane. Functionally, two-heme-containing cytochrome. Catalyzes ascorbate-dependent trans-membrane electron transfer by utilizing a concerted H(+)/e(-) transfer mechanism. The sequence is that of Probable ascorbate-specific transmembrane electron transporter 1 from Oryza sativa subsp. japonica (Rice).